A 229-amino-acid polypeptide reads, in one-letter code: Uracil-DNA glycosylase (229 aa).

Asp-65 acts as the Proton acceptor in catalysis.

The protein belongs to the uracil-DNA glycosylase (UDG) superfamily. UNG family.

The protein resides in the cytoplasm. The catalysed reaction is Hydrolyzes single-stranded DNA or mismatched double-stranded DNA and polynucleotides, releasing free uracil.. In terms of biological role, excises uracil residues from the DNA which can arise as a result of misincorporation of dUMP residues by DNA polymerase or due to deamination of cytosine. The protein is Uracil-DNA glycosylase of Limosilactobacillus fermentum (strain NBRC 3956 / LMG 18251) (Lactobacillus fermentum).